Consider the following 317-residue polypeptide: MIMRFGYVSHAMALWDCSPAKTMTFTSFQKLSKQEREDKLYDVTRQNLEHTIRILHYNIAHEIPLYRLSSSIVPLATHPEVEFDYIGLFTPLWRKIGALIKEHNLRVSFHPNQFTLFTSDKPHITTNAITDMTYHYKVLDAIGIADSSYINIHVGGAYGNKEKAVERFHENIKKLPAHIKRQMTLENDDKTYTTAETLSICQKEKIPFVFDYHHHMANLCEEPLEELLPAIFETWAHTNILPKVHISSPKSKKEFRAHAEYIDLEFIKPFLHVAKKVNHNFDIMIESKQKDLAMLQFIHELSAIRGIKRINSSTLQW.

The protein belongs to the uve1/UvsE family.

Its function is as follows. Component in a DNA repair pathway. Removal of UV LIGHT damaged nucleotides. Recognizes pyrimidine dimers and cleave a phosphodiester bond immediately 5' to the lesion. The polypeptide is UV DNA damage endonuclease (Bacillus cereus (strain ATCC 10987 / NRS 248)).